Here is a 395-residue protein sequence, read N- to C-terminus: L-methionine gamma-lyase (395 aa).

Residues 56–58 (YTR) and 86–87 (GM) contribute to the pyridoxal 5'-phosphate site. Tyrosine 111 serves as a coordination point for substrate. Pyridoxal 5'-phosphate is bound at residue 206–208 (SVT). Lysine 209 bears the N6-(pyridoxal phosphate)lysine mark. Arginine 373 contributes to the substrate binding site.

Belongs to the trans-sulfuration enzymes family. L-methionine gamma-lyase subfamily. Homotetramer. It depends on pyridoxal 5'-phosphate as a cofactor.

The enzyme catalyses L-methionine + H2O = methanethiol + 2-oxobutanoate + NH4(+). It carries out the reaction L-homocysteine + H2O = 2-oxobutanoate + hydrogen sulfide + NH4(+) + H(+). Its function is as follows. Catalyzes the alpha,gamma-elimination of L-methionine to produce methanethiol, 2-oxobutanoate and ammonia; methanethiol (methyl mercaptan) is considered to be one of the main causes of the oral malodor associated with periodontitis. Also displays homocysteine desulfhydrase activity, degrading homocysteine to produce hydrogen sulfide, 2-oxobutanoate and ammonia. L-cysteine and S-methyl-L-cysteine are poor substrates for the enzyme. In terms of biological role, plays an important role in the resistance of F.nucleatum to the antibacterial agent 3-chloro-DL-alanine (3CA), thanks to its 3CA chloride-lyase (deaminating) activity. The chain is L-methionine gamma-lyase from Fusobacterium nucleatum subsp. polymorphum (Fusobacterium polymorphum).